The chain runs to 128 residues: Diacylglycerol kinase (128 aa).

A divalent metal cation is bound at residue Glu34. The next 2 membrane-spanning stretches (helical) occupy residues 35 to 55 (SAFR…SYLT) and 58 to 78 (FLEW…ELIN). The Proton acceptor role is filled by Glu75. Glu82 is an a divalent metal cation binding site. A helical transmembrane segment spans residues 108–128 (LIGLIFWAFIWGRYLLTLYFN).

Belongs to the bacterial diacylglycerol kinase family. Mg(2+) serves as cofactor.

It localises to the cell inner membrane. It carries out the reaction a 1,2-diacyl-sn-glycerol + ATP = a 1,2-diacyl-sn-glycero-3-phosphate + ADP + H(+). Its function is as follows. Catalyzes the ATP-dependent phosphorylation of sn-l,2-diacylglycerol (DAG) to phosphatidic acid. Involved in the recycling of diacylglycerol produced as a by-product during membrane-derived oligosaccharide (MDO) biosynthesis. This chain is Diacylglycerol kinase (dgkA), found in Helicobacter pylori (strain J99 / ATCC 700824) (Campylobacter pylori J99).